We begin with the raw amino-acid sequence, 492 residues long: MGSCCSCLDRDSVPHNHPTKFKVTNVDDEGVELGSGVMELTQSELVLHLHQQEAVRWPYLCLRRYGYDSNLFSFESGRRCQTGQGIFAFKCSRAEEIFNLLQDLMQCNSINVTEEPVIITRNSHPQELDLPRGSSQPTGYTVSSFSNGFPGCPGEGPRFSSAPRRPSTSSLRHPSPGEESTQTLIASDEQSHTYVNTPTGEEDRRSRHCLQPLPEGRVPFPPQTQVSDQRDPQVFLQPGQVKFVLGPTPARRQVMKCQSLCPSMQDPPLHNNNEGPSECPAQPKCTYENVSGGLQQGAGWRLSPEERGWSGLAHRRAALLHYENLPPLPPVWESQVQQLRGEAGDDGDSKDGLTPSSNGFPDGEEDETPLQKPTSTRASARSHSSFPVPLTRRRGSPRVFNFDFRRPGPEPPRQLNYIQVELKGWGTAHPKGPQNPSVSGAPGPTPHPARSSDSYAVIDLKKTVAMSNLQRALPRDDGTVRKTRHNSTDLPL.

Gly-2 carries N-myristoyl glycine lipidation. Residues Val-13 to Glu-115 form the IRS-type PTB domain. Disordered regions lie at residues Pro-125–Arg-205, Gln-337–Arg-413, and Trp-425–Leu-492. Polar residues-rich tracts occupy residues Gly-133–Asn-147 and Pro-166–Ile-185. The segment covering Thr-374–Ser-385 has biased composition (low complexity).

Binds NTRK1, FGFR1, NGFR, GRB2, PTPN11 and ERK2. Post-translationally, phosphorylated on tyrosine residues upon stimulation by BFGF or NGFB.

The protein localises to the membrane. Functionally, adapter protein that links FGF and NGF receptors to downstream signaling pathways. Involved in the activation of MAP kinases. Down-regulates ERK2 signaling by interfering with the phosphorylation and nuclear translocation of ERK2. This chain is Fibroblast growth factor receptor substrate 3 (Frs3), found in Rattus norvegicus (Rat).